A 64-amino-acid polypeptide reads, in one-letter code: Small ribosomal subunit protein bS21 (64 aa).

The tract at residues 42 to 64 is disordered; it reads KKEKEKAAAKKRNKYNKRRSFYY. The span at 50–64 shows a compositional bias: basic residues; sequence AKKRNKYNKRRSFYY.

The protein belongs to the bacterial ribosomal protein bS21 family.

The polypeptide is Small ribosomal subunit protein bS21 (Malacoplasma penetrans (strain HF-2) (Mycoplasma penetrans)).